The following is a 251-amino-acid chain: Diphthine synthase (251 aa).

Residues Asp-83, Leu-86, 111 to 112, Leu-163, and Leu-205 contribute to the S-adenosyl-L-methionine site; that span reads SI.

It belongs to the diphthine synthase family. As to quaternary structure, homodimer.

It carries out the reaction 2-[(3S)-amino-3-carboxypropyl]-L-histidyl-[translation elongation factor 2] + 3 S-adenosyl-L-methionine = diphthine-[translation elongation factor 2] + 3 S-adenosyl-L-homocysteine + 3 H(+). It participates in protein modification; peptidyl-diphthamide biosynthesis. Functionally, S-adenosyl-L-methionine-dependent methyltransferase that catalyzes the trimethylation of the amino group of the modified target histidine residue in translation elongation factor 2 (EF-2), to form an intermediate called diphthine. The three successive methylation reactions represent the second step of diphthamide biosynthesis. The sequence is that of Diphthine synthase from Pyrobaculum calidifontis (strain DSM 21063 / JCM 11548 / VA1).